Reading from the N-terminus, the 484-residue chain is Adenylyltransferase and sulfurtransferase uba4 (484 aa).

Positions 39 to 49 (AKAQSAAATTA) are enriched in low complexity. The segment at 39–58 (AKAQSAAATTAGDNHDKPRR) is disordered. ATP-binding positions include Gly-98, Asp-119, 126 to 130 (SNLHR), Lys-143, and 187 to 188 (DN). 2 residues coordinate Zn(2+): Cys-236 and Cys-239. Cys-253 (glycyl thioester intermediate; for adenylyltransferase activity) is an active-site residue. Residues Cys-313 and Cys-316 each contribute to the Zn(2+) site. The Rhodanese domain maps to 370 to 482 (PEKTPTLIDV…WREQVDPEWP (113 aa)). Cys-437 (cysteine persulfide intermediate; for sulfurtransferase activity) is an active-site residue.

This sequence in the N-terminal section; belongs to the HesA/MoeB/ThiF family. UBA4 subfamily. Zn(2+) is required as a cofactor.

The protein localises to the cytoplasm. Its subcellular location is the cytosol. It catalyses the reaction [molybdopterin-synthase sulfur-carrier protein]-C-terminal Gly-Gly + ATP + H(+) = [molybdopterin-synthase sulfur-carrier protein]-C-terminal Gly-Gly-AMP + diphosphate. It carries out the reaction [molybdopterin-synthase sulfur-carrier protein]-C-terminal Gly-Gly-AMP + S-sulfanyl-L-cysteinyl-[cysteine desulfurase] + AH2 = [molybdopterin-synthase sulfur-carrier protein]-C-terminal-Gly-aminoethanethioate + L-cysteinyl-[cysteine desulfurase] + A + AMP + 2 H(+). Its pathway is tRNA modification; 5-methoxycarbonylmethyl-2-thiouridine-tRNA biosynthesis. It functions in the pathway cofactor biosynthesis; molybdopterin biosynthesis. In terms of biological role, plays a central role in 2-thiolation of mcm(5)S(2)U at tRNA wobble positions of cytosolic tRNA(Lys), tRNA(Glu) and tRNA(Gln). Also essential during biosynthesis of the molybdenum cofactor. Acts by mediating the C-terminal thiocarboxylation of sulfur carriers urm1 and mocs2a. Its N-terminus first activates urm1 and mocs2a as acyl-adenylates (-COAMP), then the persulfide sulfur on the catalytic cysteine is transferred to urm1 and mocs2a to form thiocarboxylation (-COSH) of their C-terminus. The reaction probably involves hydrogen sulfide that is generated from the persulfide intermediate and that acts as a nucleophile towards urm1 and mocs2a. Subsequently, a transient disulfide bond is formed. Does not use thiosulfate as sulfur donor; nfs1 probably acting as a sulfur donor for thiocarboxylation reactions. This chain is Adenylyltransferase and sulfurtransferase uba4, found in Aspergillus terreus (strain NIH 2624 / FGSC A1156).